Consider the following 107-residue polypeptide: Serine-rich and transmembrane domain-containing protein 1 (107 aa).

A helical membrane pass occupies residues 43–63 (IYVSIFLSLLAFLLLLLIIAL).

Its subcellular location is the membrane. The polypeptide is Serine-rich and transmembrane domain-containing protein 1 (Sertm1) (Mus musculus (Mouse)).